The chain runs to 1356 residues: Kinesin-like protein KIF24 (1356 aa).

Residues 1-64 (MASWLYECLC…FQLIKIIKIM (64 aa)) form the SAM domain. Positions 93 to 119 (GPRRQLHFDSPSASKDKMANNETGSLS) are disordered. S102 carries the phosphoserine modification. A Kinesin motor domain is found at 218 to 541 (KIRVCVRKRP…LRYADRVKEL (324 aa)). Residue 308–315 (GQTGAGKT) participates in ATP binding. S473 bears the Phosphoserine mark. Residues 473–702 (SLLALKECIR…PTRGKKVQPV (230 aa)) form an interaction with MPHOSPH9 region. The span at 552–571 (TSQNQTSANASPKRIQSSPV) shows a compositional bias: polar residues. 5 disordered regions span residues 552-581 (TSQN…CSPK), 597-664 (PTKV…LCSE), 788-840 (EGRL…STAL), 897-947 (RGAL…HQKP), and 964-998 (VPEQ…DQRD). S579 is subject to Phosphoserine. Residue T615 is modified to Phosphothreonine; by NEK2. Residue S616 is modified to Phosphoserine; by NEK2. Residues S640, S817, and S820 each carry the phosphoserine modification. Positions 640–653 (SPRKGTTRSGHSIK) are enriched in basic residues. A compositionally biased stretch (acidic residues) spans 810–821 (QAEDLDDSDFSE). The span at 830 to 840 (QPAMKQGSTAL) shows a compositional bias: polar residues. A compositionally biased stretch (polar residues) spans 970-979 (GSLSSPSPEN). Position 1008 is a phosphoserine (S1008). A disordered region spans residues 1109–1140 (LSSSPPDNRPSGDLPALSPSPIHQHSPDKLPG).

This sequence belongs to the TRAFAC class myosin-kinesin ATPase superfamily. Kinesin family. In terms of assembly, interacts with CCP110, CEP97, TALPID3. Interacts with MPHOSPH9. As to expression, expressed in brain, spinal cord, and small intestine.

The protein resides in the cytoplasm. The protein localises to the cytoskeleton. It localises to the microtubule organizing center. It is found in the centrosome. Its subcellular location is the centriole. In terms of biological role, microtubule-dependent motor protein that acts as a negative regulator of ciliogenesis by mediating recruitment of CCP110 to mother centriole in cycling cells, leading to restrict nucleation of cilia at centrioles. Mediates depolymerization of microtubules of centriolar origin, possibly to suppress aberrant cilia formation. Following activation by NEK2 involved in disassembly of primary cilium during G2/M phase but does not disassemble fully formed ciliary axonemes. As cilium assembly and disassembly is proposed to coexist in a dynamic equilibrium may suppress nascent cilium assembly and, potentially, ciliar re-assembly in cells that have already disassembled their cilia ensuring the completion of cilium removal in the later stages of the cell cycle. Plays an important role in recruiting MPHOSPH9, a negative regulator of cilia formation to the distal end of mother centriole. In Mus musculus (Mouse), this protein is Kinesin-like protein KIF24 (Kif24).